A 218-amino-acid polypeptide reads, in one-letter code: Probable transaldolase 2 (218 aa).

K83 serves as the catalytic Schiff-base intermediate with substrate.

This sequence belongs to the transaldolase family. Type 3B subfamily.

It is found in the cytoplasm. It carries out the reaction D-sedoheptulose 7-phosphate + D-glyceraldehyde 3-phosphate = D-erythrose 4-phosphate + beta-D-fructose 6-phosphate. It functions in the pathway carbohydrate degradation; pentose phosphate pathway; D-glyceraldehyde 3-phosphate and beta-D-fructose 6-phosphate from D-ribose 5-phosphate and D-xylulose 5-phosphate (non-oxidative stage): step 2/3. Functionally, transaldolase is important for the balance of metabolites in the pentose-phosphate pathway. In Listeria innocua serovar 6a (strain ATCC BAA-680 / CLIP 11262), this protein is Probable transaldolase 2.